The chain runs to 479 residues: Endoglucanase 20 (479 aa).

An N-terminal signal peptide occupies residues 1–21 (MGKLLVLMLVGMFLAFESLEA). Asparagine 29 carries an N-linked (GlcNAc...) asparagine glycan. Aspartate 76 functions as the Nucleophile in the catalytic mechanism. The active site involves histidine 398. N-linked (GlcNAc...) asparagine glycosylation occurs at asparagine 442. Catalysis depends on residues aspartate 449 and glutamate 458.

This sequence belongs to the glycosyl hydrolase 9 (cellulase E) family.

The protein localises to the secreted. It catalyses the reaction Endohydrolysis of (1-&gt;4)-beta-D-glucosidic linkages in cellulose, lichenin and cereal beta-D-glucans.. The sequence is that of Endoglucanase 20 from Arabidopsis thaliana (Mouse-ear cress).